Consider the following 132-residue polypeptide: Global transcriptional regulator Spx 2 (132 aa).

C10 and C13 are joined by a disulfide.

Belongs to the ArsC family. Spx subfamily. Interacts with the C-terminal domain of the alpha subunit of the RNAP.

It localises to the cytoplasm. Global transcriptional regulator that plays a key role in stress response and exerts either positive or negative regulation of genes. Acts by interacting with the C-terminal domain of the alpha subunit of the RNA polymerase (RNAP). This interaction can enhance binding of RNAP to the promoter region of target genes and stimulate their transcription, or block interaction of RNAP with activator. The chain is Global transcriptional regulator Spx 2 from Lactococcus lactis subsp. lactis (strain IL1403) (Streptococcus lactis).